A 217-amino-acid polypeptide reads, in one-letter code: UPF0502 protein ASA_1460 (217 aa).

The protein belongs to the UPF0502 family.

The polypeptide is UPF0502 protein ASA_1460 (Aeromonas salmonicida (strain A449)).